Reading from the N-terminus, the 217-residue chain is EF-hand domain-containing protein D2 homolog (217 aa).

Over residues 1–28 (MSVSSNASSASNKDSVDSPSSTTNTDSS) the composition is skewed to low complexity. Positions 1-29 (MSVSSNASSASNKDSVDSPSSTTNTDSSE) are disordered. 2 consecutive EF-hand domains span residues 69-104 (NQIK…LGAP) and 105-140 (QTHL…AQAG). Ca(2+) is bound by residues D82, D86, E93, D118, D120, D122, K124, and E129. The span at 191-204 (EQEERRREEEERAQ) shows a compositional bias: basic and acidic residues. Residues 191 to 217 (EQEERRREEEERAQRRQQFQQRAAIFQ) are disordered. The span at 206 to 217 (RQQFQQRAAIFQ) shows a compositional bias: low complexity.

The protein is EF-hand domain-containing protein D2 homolog (Swip-1) of Drosophila melanogaster (Fruit fly).